The following is a 195-amino-acid chain: Glycerol-3-phosphate acyltransferase (195 aa).

The next 4 helical transmembrane spans lie at 2–22, 79–99, 111–131, and 146–166; these read INLL…SFIV, AALM…LLGF, VALI…VVIL, and TILP…GLVL.

The protein belongs to the PlsY family. Probably interacts with PlsX.

It is found in the cell membrane. The enzyme catalyses an acyl phosphate + sn-glycerol 3-phosphate = a 1-acyl-sn-glycero-3-phosphate + phosphate. It functions in the pathway lipid metabolism; phospholipid metabolism. Functionally, catalyzes the transfer of an acyl group from acyl-phosphate (acyl-PO(4)) to glycerol-3-phosphate (G3P) to form lysophosphatidic acid (LPA). This enzyme utilizes acyl-phosphate as fatty acyl donor, but not acyl-CoA or acyl-ACP. This Alkaliphilus metalliredigens (strain QYMF) protein is Glycerol-3-phosphate acyltransferase.